We begin with the raw amino-acid sequence, 288 residues long: Histone H3-like centromeric protein hcp-3 (288 aa).

The tract at residues 96 to 194 (YHARKEQARR…VTKTRRYRPG (99 aa)) is disordered. Residues 178–193 (MRAGRNRVTKTRRYRP) are compositionally biased toward basic residues. Residues 191–288 (YRPGQKALEE…LYRRLCLRHL (98 aa)) form an H3-like region.

It belongs to the histone H3 family. In terms of assembly, forms a nucleosome-like histone octamer containing two molecules each of H2A, H2B, hcp-3 and H4 assembled in one hcp-3-H4 heterotetramer and two H2A-H2B heterodimers. The hcp-3-H4 heterotetramer is more compact and structurally more rigid than corresponding H3-H4 heterotetramers. Interacts with knl-2. Interacts with lin-53.

It localises to the nucleus. Its subcellular location is the chromosome. The protein resides in the centromere. The protein localises to the kinetochore. Its function is as follows. Histone H3-like variant which exclusively replaces conventional H3 in the nucleosome core of centromeric chromatin at the inner plate of the kinetochore. Required for recruitment and assembly of kinetochore proteins, mitotic progression and chromosome segregation. May serve as an epigenetic mark that propagates centromere identity through replication and cell division. Might promote cleavage furrow stability during cytokinesis. Not required for chromosome segregation during meiosis. The protein is Histone H3-like centromeric protein hcp-3 of Caenorhabditis elegans.